The chain runs to 400 residues: Phosphoglycerate kinase (400 aa).

Substrate-binding positions include 24–26 (DFN), R40, 63–66 (HFGR), R121, and R154. ATP-binding positions include K205, G296, E327, and 356–359 (GGDS).

As to quaternary structure, monomer.

The protein resides in the cytoplasm. The enzyme catalyses (2R)-3-phosphoglycerate + ATP = (2R)-3-phospho-glyceroyl phosphate + ADP. Its pathway is carbohydrate degradation; glycolysis; pyruvate from D-glyceraldehyde 3-phosphate: step 2/5. In Nostoc sp. (strain PCC 7120 / SAG 25.82 / UTEX 2576), this protein is Phosphoglycerate kinase.